Consider the following 29-residue polypeptide: Cyclotide cter-L (29 aa).

A cross-link (cyclopeptide (His-Asp)) is located at residues 1–29 (HEPCGESCVFIPCITTVVGCSCKNKVCYD). Intrachain disulfides connect cysteine 4–cysteine 20, cysteine 8–cysteine 22, and cysteine 13–cysteine 27.

In terms of processing, contains 3 disulfide bonds. Post-translationally, this is a cyclic peptide.

Its function is as follows. Probably participates in a plant defense mechanism. This Clitoria ternatea (Butterfly pea) protein is Cyclotide cter-L.